Here is a 62-residue protein sequence, read N- to C-terminus: Large ribosomal subunit protein bL28 (62 aa).

It belongs to the bacterial ribosomal protein bL28 family.

In Acidothermus cellulolyticus (strain ATCC 43068 / DSM 8971 / 11B), this protein is Large ribosomal subunit protein bL28.